The primary structure comprises 650 residues: Hemocyanin subunit 2 (650 aa).

Residues Ser120 and Ser172 are each glycosylated (O-linked (GalNAc...) serine). Residues His193, His197, and His225 each contribute to the Cu cation site. The N-linked (GlcNAc...) asparagine glycan is linked to Asn309. Residues His344, His348, and His384 each contribute to the Cu cation site.

Belongs to the tyrosinase family. Hemocyanin subfamily. In terms of assembly, hexamer of a number of different chains, of which five have been identified. Contains one N-glycosylated and three O-glycosylated residues. The position of one of the O-glycosylated residues has not been determined. Post-translationally, O-linked glycan at Ser-120 may be composed of two GalNAc, three Gal, and two N-acetylneuraminic acid units for a total 1525-Da MW. As to expression, hemolymph.

Its subcellular location is the secreted. It is found in the extracellular space. Hemocyanins are copper-containing oxygen carriers occurring freely dissolved in the hemolymph of many mollusks and arthropods. The sequence is that of Hemocyanin subunit 2 from Carcinus aestuarii (Green crab).